A 239-amino-acid polypeptide reads, in one-letter code: Small ribosomal subunit protein eS1 (239 aa).

The interval 1 to 24 (MAIQPPGSYPQGNKKGKAKKKSGQ) is disordered.

The protein belongs to the eukaryotic ribosomal protein eS1 family. Component of the small ribosomal subunit. Mature ribosomes consist of a small (40S) and a large (60S) subunit. The 40S subunit contains about 33 different proteins and 1 molecule of RNA (18S). The 60S subunit contains about 49 different proteins and 3 molecules of RNA (25S, 5.8S and 5S).

The protein resides in the cytoplasm. In Encephalitozoon cuniculi (strain GB-M1) (Microsporidian parasite), this protein is Small ribosomal subunit protein eS1.